The following is a 281-amino-acid chain: Very long chain fatty acid elongase 7 (281 aa).

Alanine 2 carries the N-acetylalanine modification. At 2-27 the chain is on the lumenal side; the sequence is AFSDLTSRTVRLYDNWIKDADPRVED. The helical transmembrane segment at 28 to 48 threads the bilayer; that stretch reads WLLMSSPLPQTIILGFYVYFV. At 49–66 the chain is on the cytoplasmic side; it reads TSLGPKLMENRKPFELKK. A helical membrane pass occupies residues 67 to 87; that stretch reads VMITYNFSIVLFSVYMFYEFI. The Lumenal segment spans residues 88 to 115; it reads MSGWGTGYSFRCDIVDYSQSPTALRMVR. A disulfide bridge links cysteine 99 with cysteine 231. The helical transmembrane segment at 116–136 threads the bilayer; sequence TCWLYYFSKFIELLDTIFFIL. 3-oxoeicosanoyl-CoA contacts are provided by lysine 124, arginine 137, lysine 139, glutamine 142, and histidine 147. Residues 137–142 are Cytoplasmic-facing; it reads RKKNSQ. The chain crosses the membrane as a helical span at residues 143–162; the sequence is VTFLHVFHHTIMPWTWWFGV. Positions 147–151 match the HxxHH motif motif; sequence HVFHH. Histidine 150 acts as the Nucleophile in catalysis. Over 163–171 the chain is Lumenal; it reads KFAAGGLGT. The chain crosses the membrane as a helical span at residues 172 to 194; the sequence is FHAFLNTAVHVVMYSYYGLCALG. Positions 187, 204, 208, and 211 each coordinate 3-oxoeicosanoyl-CoA. Topologically, residues 195 to 206 are cytoplasmic; sequence PDYQKYLWWKKY. A helical membrane pass occupies residues 207–227; it reads LTSLQLIQFVLITIHISQFFF. Over 228–236 the chain is Lumenal; the sequence is MEDCKYQFP. The chain crosses the membrane as a helical span at residues 237-257; that stretch reads VFQYIIMSYGCIFLLLFLHFW. The Cytoplasmic segment spans residues 258–281; the sequence is YRAYTKGQRLPKTVKHGICKNKDH. Arginine 266 contributes to the 3-oxoeicosanoyl-CoA binding site. Residues 277-281 carry the Di-lysine motif motif; the sequence is KNKDH.

Belongs to the ELO family. ELOVL7 subfamily. Homodimer. Interacts with TECR.

The protein resides in the endoplasmic reticulum membrane. The enzyme catalyses a very-long-chain acyl-CoA + malonyl-CoA + H(+) = a very-long-chain 3-oxoacyl-CoA + CO2 + CoA. It carries out the reaction eicosanoyl-CoA + malonyl-CoA + H(+) = 3-oxodocosanoyl-CoA + CO2 + CoA. It catalyses the reaction (5Z,8Z,11Z,14Z)-eicosatetraenoyl-CoA + malonyl-CoA + H(+) = (7Z,10Z,13Z,16Z)-3-oxodocosatetraenoyl-CoA + CO2 + CoA. The catalysed reaction is (6Z,9Z,12Z)-octadecatrienoyl-CoA + malonyl-CoA + H(+) = (8Z,11Z,14Z)-3-oxoeicosatrienoyl-CoA + CO2 + CoA. The enzyme catalyses (9Z,12Z)-octadecadienoyl-CoA + malonyl-CoA + H(+) = (11Z,14Z)-3-oxoicosa-11,14-dienoyl-CoA + CO2 + CoA. It carries out the reaction (9Z)-octadecenoyl-CoA + malonyl-CoA + H(+) = 3-oxo-(11Z)-eicosenoyl-CoA + CO2 + CoA. It catalyses the reaction octadecanoyl-CoA + malonyl-CoA + H(+) = 3-oxoeicosanoyl-CoA + CO2 + CoA. The catalysed reaction is hexadecanoyl-CoA + malonyl-CoA + H(+) = 3-oxooctadecanoyl-CoA + CO2 + CoA. The enzyme catalyses (9Z,12Z,15Z)-octadecatrienoyl-CoA + malonyl-CoA + H(+) = (11Z,14Z,17Z)-3-oxoeicosatrienoyl-CoA + CO2 + CoA. Its pathway is lipid metabolism; fatty acid biosynthesis. Catalyzes the first and rate-limiting reaction of the four reactions that constitute the long-chain fatty acids elongation cycle. This endoplasmic reticulum-bound enzymatic process allows the addition of 2 carbons to the chain of long- and very long-chain fatty acids (VLCFAs) per cycle. Condensing enzyme with higher activity toward C18 acyl-CoAs, especially C18:3(n-3) acyl-CoAs and C18:3(n-6)-CoAs. Also active toward C20:4-, C18:0-, C18:1-, C18:2- and C16:0-CoAs, and weakly toward C20:0-CoA. Little or no activity toward C22:0-, C24:0-, or C26:0-CoAs. May participate in the production of saturated and polyunsaturated VLCFAs of different chain lengths that are involved in multiple biological processes as precursors of membrane lipids and lipid mediators. This chain is Very long chain fatty acid elongase 7, found in Bos taurus (Bovine).